A 650-amino-acid polypeptide reads, in one-letter code: MGKIIGIDLGTTNSCVAIMEGNQVKVIENSEGTRTTPSIIAYMDDNEVLVGAPAKRQSVTNPKNTLFAVKRLIGRRFEEKEVQKDIGLMPYSIIKADNGDAWVEAHGEKLAPPQVSAEVLRKMKKTAEDYLGEPVTEAVITVPAYFNDSQRQATKDAGRIAGLEVKRIINEPTAAALAFGLDKVEKGDRKIAVYDLGGGTFDVSIIEIADVDGEMQFEVLSTNGDTFLGGEDFDQRIIDYIIGEFKKEQGVDLSKDVLALQRLKEAAEKAKIELSSGQQTEINLPYITADASGPKHLNLKITRAKLEALVEDLVERTIEPCRIAIKDAGVKVSDIDDVILVGGQTRMPKVMEKVKEFFGKDPRRDVNPDEAVAVGAAIQGQVLSGDRKDVLLLDVTPLSLGIETLGGVMTKMINKNTTIPTKHAQVYSTADDNQGAVTIKVFQGEREMAAGNKLLGEFNLEGIPPAPRGVPQIEVTFDIDANGILHVGAKDKATGKENKITIKANSGLSEAEIDQMIKDAEANAAEDHKLRELADSRNQGDALVHSTKKALTEYGDKLDAGEKEAIEASLKSLEEVLKDTSADKAAIDAKVEELGKVSQKLGEKMYADMQAQQAGAAGAAGAAEGAAHAGGAQQAADDVVDAEFKEVKKD.

Residue Thr200 is modified to Phosphothreonine; by autocatalysis.

The protein belongs to the heat shock protein 70 family.

In terms of biological role, acts as a chaperone. This Burkholderia orbicola (strain MC0-3) protein is Chaperone protein DnaK.